The chain runs to 433 residues: 5-methylthioadenosine/S-adenosylhomocysteine deaminase (433 aa).

Residues His-67 and His-69 each contribute to the Zn(2+) site. Glu-96, Arg-148, and His-186 together coordinate substrate. His-213 contacts Zn(2+). Substrate is bound by residues Glu-216 and Asp-301. Asp-301 contacts Zn(2+).

The protein belongs to the metallo-dependent hydrolases superfamily. MTA/SAH deaminase family. It depends on Zn(2+) as a cofactor.

It catalyses the reaction S-adenosyl-L-homocysteine + H2O + H(+) = S-inosyl-L-homocysteine + NH4(+). The catalysed reaction is S-methyl-5'-thioadenosine + H2O + H(+) = S-methyl-5'-thioinosine + NH4(+). In terms of biological role, catalyzes the deamination of 5-methylthioadenosine and S-adenosyl-L-homocysteine into 5-methylthioinosine and S-inosyl-L-homocysteine, respectively. Is also able to deaminate adenosine. The sequence is that of 5-methylthioadenosine/S-adenosylhomocysteine deaminase from Desulforamulus reducens (strain ATCC BAA-1160 / DSM 100696 / MI-1) (Desulfotomaculum reducens).